The primary structure comprises 261 residues: Imidazole glycerol phosphate synthase subunit HisF (261 aa).

Catalysis depends on residues aspartate 11 and aspartate 130.

Belongs to the HisA/HisF family. In terms of assembly, heterodimer of HisH and HisF.

The protein resides in the cytoplasm. It catalyses the reaction 5-[(5-phospho-1-deoxy-D-ribulos-1-ylimino)methylamino]-1-(5-phospho-beta-D-ribosyl)imidazole-4-carboxamide + L-glutamine = D-erythro-1-(imidazol-4-yl)glycerol 3-phosphate + 5-amino-1-(5-phospho-beta-D-ribosyl)imidazole-4-carboxamide + L-glutamate + H(+). It participates in amino-acid biosynthesis; L-histidine biosynthesis; L-histidine from 5-phospho-alpha-D-ribose 1-diphosphate: step 5/9. Functionally, IGPS catalyzes the conversion of PRFAR and glutamine to IGP, AICAR and glutamate. The HisF subunit catalyzes the cyclization activity that produces IGP and AICAR from PRFAR using the ammonia provided by the HisH subunit. The polypeptide is Imidazole glycerol phosphate synthase subunit HisF (Heliobacterium mobile (Heliobacillus mobilis)).